The sequence spans 338 residues: Glutamyl-tRNA reductase (338 aa).

Substrate contacts are provided by residues 50 to 53 (TCHR), Ser-102, 107 to 109 (ETE), and Gln-113. Cys-51 serves as the catalytic Nucleophile. NADP(+) is bound at residue 181-186 (GYSDIN).

The protein belongs to the glutamyl-tRNA reductase family. In terms of assembly, homodimer.

It carries out the reaction (S)-4-amino-5-oxopentanoate + tRNA(Glu) + NADP(+) = L-glutamyl-tRNA(Glu) + NADPH + H(+). It functions in the pathway porphyrin-containing compound metabolism; protoporphyrin-IX biosynthesis; 5-aminolevulinate from L-glutamyl-tRNA(Glu): step 1/2. In terms of biological role, catalyzes the NADPH-dependent reduction of glutamyl-tRNA(Glu) to glutamate 1-semialdehyde (GSA). The sequence is that of Glutamyl-tRNA reductase from Chlamydia caviae (strain ATCC VR-813 / DSM 19441 / 03DC25 / GPIC) (Chlamydophila caviae).